A 428-amino-acid polypeptide reads, in one-letter code: Protein CANDIDATE G-PROTEIN COUPLED RECEPTOR 6 (428 aa).

The signal sequence occupies residues 1-22; sequence MTILPFLAAVFVLQLLSTLTVA. Asn-31, Asn-89, and Asn-157 each carry an N-linked (GlcNAc...) asparagine glycan. 7 helical membrane passes run 173 to 193, 202 to 222, 238 to 258, 276 to 296, 310 to 330, 356 to 376, and 385 to 405; these read LYLV…CFCW, IHLL…CAAV, IVFY…IVLI, LLVI…VIGE, IFFL…VWSM, FYVL…VMKM, and VSNA…FYMF.

Belongs to the LU7TM family.

It localises to the membrane. In terms of biological role, G-protein coupled receptor. Plays a role in plants and microbes interactions. The protein is Protein CANDIDATE G-PROTEIN COUPLED RECEPTOR 6 of Arabidopsis thaliana (Mouse-ear cress).